Here is a 528-residue protein sequence, read N- to C-terminus: MNRLKKSHRQKSLFWRPIAPNPRWQKENPTAHGSTDTGGFGYNGGNEEVKTSSTMMNGIHALVNERQNEWLRGYEVDIKSRFDNIESVLKDILAQQSQLNFVSWANQQLFAKLGVSLTEQDWQSGVQLQSQKGFQFLYGKTLFAQFMRMSEDFFVNDPLSGQRKQEAERMFKEAGFHAVGIAPCADGRLAHILSYVLRLPYALARRKAHAGVMFDVSESVRNWVFIEHTRFRDGQPNLADEPTRYLKIAVYHFSKADPTHQGCAAHGSDDHKAAQAALQKLKDFKQAIENRFGCGSTVQTLLLGLNTDDDSMKVHIPNASGEVCLDRYVETEQLYQATMNLPDSEAKQALENAIVTCNQALGSTAPQPELVKLLSWLIGNNFSQIAYVNQYENGCYSDIGHAERFIGIGNGFEEVQLRNLSYYSFLDTVEEGVNDVDVGIKIFKGLNVKKGLPIPIIIRCDYDGRVPGSKDRAEAKALRIEKALHNRYQELSAPGLLQTLPTLRDFTSCKPAERLPGLADLSAKQRTA.

Residues 17-47 (PIAPNPRWQKENPTAHGSTDTGGFGYNGGNE) are disordered. Position 184 (Cys-184) interacts with Zn(2+). Asp-186 (proton acceptor) is an active-site residue. His-252 and Cys-263 together coordinate Zn(2+).

This sequence belongs to the beta-class carbonic anhydrase family. CsoSCA subfamily. Homodimer. Zn(2+) is required as a cofactor.

Its subcellular location is the carboxysome. It carries out the reaction hydrogencarbonate + H(+) = CO2 + H2O. Its activity is regulated as follows. Inhibited by ethoxyzolamide and dithiothreitol (in crude extracts upon expression in E.coli). Reversible hydration of carbon dioxide. This bacteria encodes at least 3 CA enzymes. Essential for chemolithotrophic carbon dioxide fixation, supplies CO(2) to RuBisCO (ribulose bisphosphate carboxylase, cbbL-cbbS) in the carboxysome. The sequence is that of Carboxysome shell carbonic anhydrase from Hydrogenovibrio crunogenus (strain DSM 25203 / XCL-2) (Thiomicrospira crunogena).